A 454-amino-acid polypeptide reads, in one-letter code: MSHNDTIVAQATPPGRGGVGILRISGLKARDVAQEVLGKLPKPRHADYLPFKDVDGSALDQGIALWFPGPNSFTGEDVLELQGHGGPVILDLLLKRILTLPGVRIARPGEFSERAFLNDKLDLAQAEAIADLIDASSEQAARSALNSLQGAFSARVNHLVEALTHLRIYVEAAIDFPDEEIDFLSDGKIEAQLNGVIADLDAVRTEARQGSLLREGMKVVIAGRPNAGKSSLLNALAGREAAIVTDIAGTTRDVLREHIHIDGMPLHIIDTAGLRDASDEVERIGIERAWQEIEQADRVLFMVDGTTTDAVDPADIWPDFIARLPKNLPITVVRNKADITGETLGISEVNGHSLVRLSARTGEGVDVLRNHLKQSMGFDTNMEGGFLARRRHLQALAEAAEHLEQGKAQLLGAWAGELLAEELRLAQQSLSEITGEFTSDDLLGRIFSSFCIGK.

Residues R23, E80, and K120 each contribute to the (6S)-5-formyl-5,6,7,8-tetrahydrofolate site. Residues 216 to 377 (GMKVVIAGRP…LRNHLKQSMG (162 aa)) form the TrmE-type G domain. N226 is a binding site for K(+). Residues 226-231 (NAGKSS), 245-251 (TDIAGTT), 270-273 (DTAG), 335-338 (NKAD), and 358-360 (SAR) contribute to the GTP site. S230 is a Mg(2+) binding site. Positions 245, 247, and 250 each coordinate K(+). T251 provides a ligand contact to Mg(2+). K454 contacts (6S)-5-formyl-5,6,7,8-tetrahydrofolate.

This sequence belongs to the TRAFAC class TrmE-Era-EngA-EngB-Septin-like GTPase superfamily. TrmE GTPase family. Homodimer. Heterotetramer of two MnmE and two MnmG subunits. K(+) is required as a cofactor.

Its subcellular location is the cytoplasm. Functionally, exhibits a very high intrinsic GTPase hydrolysis rate. Involved in the addition of a carboxymethylaminomethyl (cmnm) group at the wobble position (U34) of certain tRNAs, forming tRNA-cmnm(5)s(2)U34. This is tRNA modification GTPase MnmE from Salmonella gallinarum (strain 287/91 / NCTC 13346).